The primary structure comprises 393 residues: Elongation factor Tu (393 aa).

The 194-residue stretch at 10–203 (KPHVNIGTIG…AVDEFIPEPV (194 aa)) folds into the tr-type G domain. The interval 19–26 (GHVDHGKT) is G1. 19–26 (GHVDHGKT) is a binding site for GTP. Thr-26 provides a ligand contact to Mg(2+). A G2 region spans residues 60-64 (GITIS). Residues 81–84 (DCPG) form a G3 region. GTP-binding positions include 81–85 (DCPGH) and 136–139 (NKVD). Residues 136-139 (NKVD) form a G4 region. The interval 173–175 (SAL) is G5.

Belongs to the TRAFAC class translation factor GTPase superfamily. Classic translation factor GTPase family. EF-Tu/EF-1A subfamily. As to quaternary structure, monomer.

Its subcellular location is the cytoplasm. The enzyme catalyses GTP + H2O = GDP + phosphate + H(+). GTP hydrolase that promotes the GTP-dependent binding of aminoacyl-tRNA to the A-site of ribosomes during protein biosynthesis. This Chlorobium limicola (strain DSM 245 / NBRC 103803 / 6330) protein is Elongation factor Tu.